We begin with the raw amino-acid sequence, 29 residues long: Galanin (29 aa).

A29 bears the Alanine amide mark.

Belongs to the galanin family.

The protein localises to the secreted. Functionally, contracts smooth muscle of the gastrointestinal and genitourinary tract, regulates growth hormone release, modulates insulin release, and may be involved in the control of adrenal secretion. This is Galanin (GAL) from Ovis aries (Sheep).